Here is a 242-residue protein sequence, read N- to C-terminus: Phosphoribosyl isomerase A (242 aa).

The active-site Proton acceptor is the D12. Residue D131 is the Proton donor of the active site.

This sequence belongs to the HisA/HisF family.

It is found in the cytoplasm. It carries out the reaction 1-(5-phospho-beta-D-ribosyl)-5-[(5-phospho-beta-D-ribosylamino)methylideneamino]imidazole-4-carboxamide = 5-[(5-phospho-1-deoxy-D-ribulos-1-ylimino)methylamino]-1-(5-phospho-beta-D-ribosyl)imidazole-4-carboxamide. It catalyses the reaction N-(5-phospho-beta-D-ribosyl)anthranilate = 1-(2-carboxyphenylamino)-1-deoxy-D-ribulose 5-phosphate. Its pathway is amino-acid biosynthesis; L-histidine biosynthesis; L-histidine from 5-phospho-alpha-D-ribose 1-diphosphate: step 4/9. It participates in amino-acid biosynthesis; L-tryptophan biosynthesis; L-tryptophan from chorismate: step 3/5. Its function is as follows. Involved in both the histidine and tryptophan biosynthetic pathways. This chain is Phosphoribosyl isomerase A, found in Streptomyces avermitilis (strain ATCC 31267 / DSM 46492 / JCM 5070 / NBRC 14893 / NCIMB 12804 / NRRL 8165 / MA-4680).